We begin with the raw amino-acid sequence, 452 residues long: Lamina-associated polypeptide 2, isoforms beta/delta/epsilon/gamma (452 aa).

The tract at residues 1–409 is nucleoplasmic; the sequence is MPEFLEDPSV…KSEKTKKRRS (409 aa). An LEM-like domain is found at 5–48; that stretch reads LEDPSVLTKDKLKSELVANNVTLPAGEQRKDVYVQLYLQHLTAR. Disordered regions lie at residues 48–111 and 149–263; these read RNRP…DLDV and REQG…RVET. The segment at 49–108 is linker; it reads NRPPLAAGANSKGPPDFSSDEEREPTPVLGSGASVGRGRGAVGRKATKKTDKPRLEDKDD. Phosphoserine is present on residues serine 59, serine 66, and serine 67. Threonine 74 carries the post-translational modification Phosphothreonine. Phosphoserine occurs at positions 79 and 82. Omega-N-methylarginine is present on residues arginine 85 and arginine 87. Over residues 96–105 the composition is skewed to basic and acidic residues; it reads KKTDKPRLED. One can recognise an LEM domain in the interval 109–153; the sequence is LDVTELSNEELLDQLVRYGVNPGPIVGTTRKLYEKKLLKLREQGT. Residues 137 to 242 form an NAKAP95-binding N region; sequence TRKLYEKKLL…TSGSSTGGPL (106 aa). Threonine 153 bears the Phosphothreonine mark. Residues 154 to 177 show a composition bias toward polar residues; that stretch reads ESRSSTPLPTVSSSAENTRQNGSN. Serine 155 and serine 158 each carry phosphoserine. 2 positions are modified to phosphothreonine: threonine 159 and threonine 163. 3 positions are modified to phosphoserine: serine 165, serine 167, and serine 176. Basic and acidic residues predominate over residues 178 to 202; sequence DSDRYSDNDEDSKIELKLEKREPLK. A Phosphoserine; by PKC modification is found at serine 179. Serine 183 and serine 189 each carry phosphoserine. Residue lysine 206 is modified to N6-acetyllysine. Threonine 210 carries the post-translational modification Phosphothreonine. 2 positions are modified to phosphoserine: serine 221 and serine 223. Positions 226–240 are enriched in low complexity; sequence GVTETEWTSGSSTGG. 6 positions are modified to phosphoserine: serine 249, serine 253, serine 264, serine 291, serine 305, and serine 306. Residues 298–370 are binds lamins B; the sequence is TGNFKHASSI…SCRRPIKGAA (73 aa). Residues 299-373 form an NAKAP95-binding C region; it reads GNFKHASSIL…RPIKGAAGRP (75 aa). Threonine 311 carries the phosphothreonine modification. Serine 314 is subject to Phosphoserine. Arginine 319 is subject to Citrulline. 3 positions are modified to phosphoserine: serine 361, serine 377, and serine 384. The residue at position 388 (lysine 388) is an N6-acetyllysine. A Glycyl lysine isopeptide (Lys-Gly) (interchain with G-Cter in SUMO2) cross-link involves residue lysine 400. Serine 401 bears the Phosphoserine mark. The helical; Signal-anchor for type II membrane protein transmembrane segment at 410 to 430 threads the bilayer; that stretch reads VPMWIKMLLFALVAVFLFLVY. At 431–452 the chain is on the lumenal side; sequence QAMETNQGNPFTNFLQDTKISN.

Belongs to the LEM family. In terms of assembly, interacts with LMNB1, LMNB2, BANF1, AKAP8L, GMCL and chromosomes. Mitosis-specific phosphorylation specifically abolishes its binding to lamin B and chromosomes. In terms of processing, citrullinated by PADI4.

It is found in the nucleus inner membrane. The protein resides in the chromosome. In terms of biological role, may help direct the assembly of the nuclear lamina and thereby help maintain the structural organization of the nuclear envelope. Possible receptor for attachment of lamin filaments to the inner nuclear membrane. May be involved in the control of initiation of DNA replication through its interaction with NAKAP95. The sequence is that of Lamina-associated polypeptide 2, isoforms beta/delta/epsilon/gamma (Tmpo) from Mus musculus (Mouse).